We begin with the raw amino-acid sequence, 481 residues long: Trigger factor (481 aa).

Positions 174 to 261 (GDIAVVSFKG…LKDLKEKELP (88 aa)) constitute a PPIase FKBP-type domain. Positions 435 to 481 (VKEKTTKASQASKTTKAKKTTTKTTKATKTATKTTKATKTQNKKEKK) are disordered. Residues 456–474 (TKTTKATKTATKTTKATKT) show a composition bias toward low complexity.

Belongs to the FKBP-type PPIase family. Tig subfamily.

Its subcellular location is the cytoplasm. It catalyses the reaction [protein]-peptidylproline (omega=180) = [protein]-peptidylproline (omega=0). Its function is as follows. Involved in protein export. Acts as a chaperone by maintaining the newly synthesized protein in an open conformation. Functions as a peptidyl-prolyl cis-trans isomerase. The chain is Trigger factor from Prochlorococcus marinus (strain MIT 9312).